The primary structure comprises 90 residues: Probable Fe(2+)-trafficking protein (90 aa).

Belongs to the Fe(2+)-trafficking protein family.

Could be a mediator in iron transactions between iron acquisition and iron-requiring processes, such as synthesis and/or repair of Fe-S clusters in biosynthetic enzymes. This Dechloromonas aromatica (strain RCB) protein is Probable Fe(2+)-trafficking protein.